The chain runs to 498 residues: Aldehyde dehydrogenase, mitochondrial (498 aa).

A mitochondrion-targeting transit peptide spans 1 to 9 (MLRATLARL). An NAD(+)-binding site is contributed by 242–247 (GSTAVG). The active-site Proton acceptor is the Glu-265. The Nucleophile role is filled by Cys-299.

The protein belongs to the aldehyde dehydrogenase family.

The protein resides in the mitochondrion. The enzyme catalyses an aldehyde + NAD(+) + H2O = a carboxylate + NADH + 2 H(+). It functions in the pathway alcohol metabolism; ethanol degradation; acetate from ethanol: step 2/2. Could have an RNA-binding activity in addition of its catalytic role. This is Aldehyde dehydrogenase, mitochondrial (ALDH2) from Leishmania tarentolae (Sauroleishmania tarentolae).